Here is a 422-residue protein sequence, read N- to C-terminus: Secernin-3 (422 aa).

Residues 1–5 constitute a propeptide that is removed on maturation; the sequence is MEPCS. C6 is a catalytic residue. A Glyoxylic acid (Cys); alternate modification is found at C6. At C6 the chain carries Pyruvic acid (Cys); alternate.

This sequence belongs to the peptidase C69 family. Secernin subfamily.

Plays a role in thermal nociception. The chain is Secernin-3 (SCRN3) from Bos taurus (Bovine).